The following is a 786-amino-acid chain: m7GpppN-mRNA hydrolase dcap-2 (786 aa).

The segment covering 25 to 61 has biased composition (polar residues); it reads QKQNKSTEEPPSSVQKLLASLQQAQNKSDLSEQPSTS. Residues 25–148 form a disordered region; that stretch reads QKQNKSTEEP…QQQQQYKGPR (124 aa). Residues 62-72 are compositionally biased toward basic residues; it reads KPKKNEKRKKA. 2 stretches are compositionally biased toward polar residues: residues 101-111 and 118-133; these read MQQQAENARIS and QVSTSKGSSRNTTAPE. Residues 134–144 show a composition bias toward low complexity; the sequence is QQNYQQQQQQY. Residues 238–366 form the Nudix hydrolase domain; sequence STVPTYGAIL…LPAYLQGNKF (129 aa). Residues 273-294 carry the Nudix box motif; it reads GKINQAEPPRDAAIRETFEETG. Positions 288 and 292 each coordinate Mg(2+). 2 disordered regions span residues 556-576 and 623-655; these read IMHSPNHPLPPTSNSPATPTA and ISSTQKQSIPKATAAPPSTEKTRSASLSGSSQV. Polar residues-rich tracts occupy residues 623-632 and 646-655; these read ISSTQKQSIP and SASLSGSSQV.

The protein belongs to the Nudix hydrolase family. DCP2 subfamily. In terms of assembly, may be a component of the decapping complex composed of dcap-1 and dcap-2. It depends on Mg(2+) as a cofactor. Mn(2+) serves as cofactor. Expressed in sensory neurons.

The protein resides in the cytoplasmic granule. The protein localises to the cytoplasm. Its subcellular location is the perinuclear region. The enzyme catalyses a 5'-end (N(7)-methyl 5'-triphosphoguanosine)-ribonucleoside in mRNA + H2O = N(7)-methyl-GDP + a 5'-end phospho-ribonucleoside in mRNA + 2 H(+). The catalysed reaction is a 5'-end (N(2),N(2),N(7)-trimethyl 5'-triphosphoguanosine)-ribonucleoside in mRNA + H2O = N(2),N(2),N(7)-trimethyl-GDP + a 5'-end phospho-ribonucleoside in mRNA + 2 H(+). Inhibited by capped and uncapped RNA. Not inhibited by dinucleotide cap or methylated nucleotide analogs. Functionally, decapping metalloenzyme that catalyzes the cleavage of the cap structure on mRNAs. Removes the 7-methyl guanine cap structure from mRNA molecules, yielding a 5'-phosphorylated mRNA fragment and 7m-GDP. RNA-decapping enzyme although it does not bind the RNA cap. May contribute to gene regulation in multiple RNA pathways including monomethylguanosine- and trimethylguanosine-capped RNAs. In oocytes, may play a role in the response to stress induced by heat shock, osmotic stress and anoxia. Required for the developmental axon guidance and regrowth of PLM touch receptor neurons. Early in embryogenesis, plays a role in ciliary shape formation in sensory neurons. Promotes survival at high temperatures. The sequence is that of m7GpppN-mRNA hydrolase dcap-2 from Caenorhabditis elegans.